We begin with the raw amino-acid sequence, 88 residues long: Small ribosomal subunit protein bS20 (88 aa).

The interval 1-20 is disordered; sequence MANTAQARKRARQAVVQNAH.

Belongs to the bacterial ribosomal protein bS20 family.

Binds directly to 16S ribosomal RNA. The polypeptide is Small ribosomal subunit protein bS20 (Ralstonia pickettii (strain 12J)).